The following is a 218-amino-acid chain: Ribose-5-phosphate isomerase A (218 aa).

Residues 28–31, 81–84, and 94–97 contribute to the substrate site; these read TGST, DGAD, and KGGG. Glutamate 103 (proton acceptor) is an active-site residue. Residue lysine 121 participates in substrate binding.

Belongs to the ribose 5-phosphate isomerase family. As to quaternary structure, homodimer.

It carries out the reaction aldehydo-D-ribose 5-phosphate = D-ribulose 5-phosphate. The protein operates within carbohydrate degradation; pentose phosphate pathway; D-ribose 5-phosphate from D-ribulose 5-phosphate (non-oxidative stage): step 1/1. Functionally, catalyzes the reversible conversion of ribose-5-phosphate to ribulose 5-phosphate. The chain is Ribose-5-phosphate isomerase A from Methylococcus capsulatus (strain ATCC 33009 / NCIMB 11132 / Bath).